Reading from the N-terminus, the 264-residue chain is Thymidylate synthase (264 aa).

Residue arginine 21 coordinates dUMP. (6R)-5,10-methylene-5,6,7,8-tetrahydrofolate is bound at residue histidine 51. 126-127 (RR) contacts dUMP. The Nucleophile role is filled by cysteine 146. Residues 166–169 (RSAD), asparagine 177, and 207–209 (HIY) each bind dUMP. Aspartate 169 lines the (6R)-5,10-methylene-5,6,7,8-tetrahydrofolate pocket. Position 263 (alanine 263) interacts with (6R)-5,10-methylene-5,6,7,8-tetrahydrofolate.

The protein belongs to the thymidylate synthase family. Bacterial-type ThyA subfamily. In terms of assembly, homodimer.

The protein resides in the cytoplasm. The enzyme catalyses dUMP + (6R)-5,10-methylene-5,6,7,8-tetrahydrofolate = 7,8-dihydrofolate + dTMP. Its pathway is pyrimidine metabolism; dTTP biosynthesis. Catalyzes the reductive methylation of 2'-deoxyuridine-5'-monophosphate (dUMP) to 2'-deoxythymidine-5'-monophosphate (dTMP) while utilizing 5,10-methylenetetrahydrofolate (mTHF) as the methyl donor and reductant in the reaction, yielding dihydrofolate (DHF) as a by-product. This enzymatic reaction provides an intracellular de novo source of dTMP, an essential precursor for DNA biosynthesis. This Cupriavidus metallidurans (strain ATCC 43123 / DSM 2839 / NBRC 102507 / CH34) (Ralstonia metallidurans) protein is Thymidylate synthase.